Consider the following 663-residue polypeptide: Polyunsaturated fatty acid lipoxygenase ALOX15 (663 aa).

Residues 2–115 (GVYRIRVSTG…ILSLPEGTGC (114 aa)) enclose the PLAT domain. The Lipoxygenase domain occupies 116-663 (TVVEDSQGLF…PSMVENSVAI (548 aa)). Residue Ser-149 is modified to Phosphoserine. 5 residues coordinate Fe cation: His-361, His-366, His-541, His-545, and Ile-663.

The protein belongs to the lipoxygenase family. In terms of assembly, interacts with PEBP1; in response to IL13/interleukin-13, prevents the interaction of PEBP1 with RAF1 to activate the ERK signaling cascade. Fe cation is required as a cofactor. Detected in leukocytes, lung and aorta.

It is found in the cytoplasm. The protein resides in the cytosol. The protein localises to the cell membrane. Its subcellular location is the lipid droplet. It catalyses the reaction (5Z,8Z,11Z,14Z)-eicosatetraenoate + O2 = (12S)-hydroperoxy-(5Z,8Z,10E,14Z)-eicosatetraenoate. The catalysed reaction is (5Z,8Z,11Z,14Z)-eicosatetraenoate + O2 = (15S)-hydroperoxy-(5Z,8Z,11Z,13E)-eicosatetraenoate. It carries out the reaction (9Z,12Z)-octadecadienoate + O2 = (13S)-hydroperoxy-(9Z,11E)-octadecadienoate. The enzyme catalyses (12S)-hydroperoxy-(5Z,8Z,10E,14Z)-eicosatetraenoate = (8S)-hydroxy-(11S,12S)-epoxy-(5Z,9E,14Z)-eicosatrienoate. It catalyses the reaction (5Z,8Z,11Z,14Z)-eicosatetraenoate + 2 O2 = (14R,15S)-dihydroperoxy-(5Z,8Z,10E,12E)-eicosatetraenoate. The catalysed reaction is (5Z,8Z,11Z,14Z)-eicosatetraenoate + 2 O2 = (8S,15S)-dihydroperoxy-(5Z,9E,11Z,13E)-eicosatetraenoate. It carries out the reaction (14S,15R)-epoxy-(5Z,8Z,11Z)-eicosatrienoate + O2 = (8S)-hydroperoxy-(14S,15R)-epoxy-(5Z,9E,11Z)-eicosatrienoate. The enzyme catalyses (14S,15R)-epoxy-(5Z,8Z,11Z)-eicosatrienoate + O2 = (12S)-hydroperoxy-(14S,15R)-epoxy-(5Z,8Z,10E)-eicosatrienoate. It catalyses the reaction (14R,15S)-epoxy-(5Z,8Z,11Z)-eicosatrienoate + O2 = (5S)-hydroperoxy-(14R,15S)-epoxy-(6E,8Z,11Z)-eicosatrienoate. The catalysed reaction is (14R,15S)-epoxy-(5Z,8Z,11Z)-eicosatrienoate + O2 = (12S)-hydroperoxy-(14R,15S)-epoxy-(5Z,8Z,10E)-eicosatrienoate. It carries out the reaction (15R)-hydroperoxy-(5Z,8Z,11Z,13E)-eicosatetraenoate = 15-oxo-(5Z,8Z,11Z,13E)-eicosatetraenoate + H2O. The enzyme catalyses (15S)-hydroperoxy-(5Z,8Z,11Z,13E)-eicosatetraenoate = (14S,15S)-epoxy-(5Z,8Z,10E,12E)-eicosatetraenoate + H2O. It catalyses the reaction (4Z,7Z,10Z,13Z,16Z)-docosapentaenoate + O2 = 14-hydroperoxy-(4Z,7Z,10Z,12E,16Z)-docosapentaenoate. The catalysed reaction is (7Z,10Z,13Z,16Z,19Z)-docosapentaenoate + O2 = 14-hydroperoxy-(7Z,10Z,12E,16Z,19Z)-docosapentaenoate. It carries out the reaction (4Z,7Z,10Z,13Z,16Z,19Z)-docosahexaenoate + O2 = (14S)-hydroperoxy-(4Z,7Z,10Z,12E,16Z,19Z)-docosahexaenoate. The enzyme catalyses (4Z,7Z,10Z,13Z,16Z,19Z)-docosahexaenoate + O2 = (17S)-hydroperoxy-(4Z,7Z,10Z,13Z,15E,19Z)-docosahexaenoate. It catalyses the reaction (7S)-hydroperoxy-(4Z,8E,10Z,13Z,16Z,19Z)-docosahexaenoate + O2 = (7S,14S)-dihydroperoxy-(4Z,8E,10Z,12E,16Z,19Z)-docosahexaenoate. The catalysed reaction is (7S)-hydroperoxy-(4Z,8E,10Z,13Z,16Z,19Z)-docosahexaenoate + O2 = (7S,17S)-dihydroperoxy-(4Z,8E,10Z,13Z,15E,19Z)-docosahexaenoate. It carries out the reaction (4Z,7Z,10Z,13Z,16Z,19Z)-docosahexaenoate + O2 = (11S)-hydroperoxy-(4Z,7Z,9E,13Z,16Z,19Z)-docosahexaenoate. The enzyme catalyses N-(5Z,8Z,11Z,14Z)-eicosatetraenoyl-taurine + O2 = N-(12S)-hydroperoxy-(5Z,8Z,10E,14Z)-eicosatetraenoyl-taurine. It catalyses the reaction N-(5Z,8Z,11Z,14Z)-eicosatetraenoyl-gamma-aminobutanoate + O2 = N-(12S)-hydroperoxy-(5Z,8Z,10E,14Z)-eicosatetraenoyl-gamma-aminobutanoate. The catalysed reaction is N-(5Z,8Z,11Z,14Z)-eicosatetraenoyl-glycine + O2 = N-(12S)-hydroperoxy-(5Z,8Z,10E,14Z)-eicosatetraenoyl-glycine. It carries out the reaction N-(5Z,8Z,11Z,14Z)-eicosatetraenoyl-L-alanine + O2 = N-(12S)-hydroperoxy-(5Z,8Z,10E,14Z)-eicosatetraenoyl-alanine. The enzyme catalyses N-(5Z,8Z,11Z,14Z)-eicosatetraenoyl-taurine + O2 = N-(15S)-hydroperoxy-(5Z,8Z,11Z,13E)-eicosatetraenoyl-taurine. It catalyses the reaction N-(5Z,8Z,11Z,14Z)-eicosatetraenoyl-gamma-aminobutanoate + O2 = N-(15S)-hydroperoxy-(5Z,8Z,11Z,13E)-eicosatetraenoyl-gamma-aminobutanoate. The catalysed reaction is N-(5Z,8Z,11Z,14Z)-eicosatetraenoyl-glycine + O2 = N-(15S)-hydroperoxy-(5Z,8Z,11Z,13E)-eicosatetraenoyl-glycine. It carries out the reaction N-(5Z,8Z,11Z,14Z)-eicosatetraenoyl-L-alanine + O2 = N-(15S)-hydroperoxy-(5Z,8Z,11Z,13E)-eicosatetraenoyl-alanine. It participates in lipid metabolism; hydroperoxy eicosatetraenoic acid biosynthesis. In terms of biological role, non-heme iron-containing dioxygenase that catalyzes the stereo-specific peroxidation of free and esterified polyunsaturated fatty acids generating a spectrum of bioactive lipid mediators. It inserts peroxyl groups at C12 or C15 of arachidonate ((5Z,8Z,11Z,14Z)-eicosatetraenoate) producing both 12-hydroperoxyeicosatetraenoate/12-HPETE and 15-hydroperoxyeicosatetraenoate/15-HPETE. It may then act on 12-HPETE to produce hepoxilins, which may show pro-inflammatory properties. Can also peroxidize linoleate ((9Z,12Z)-octadecadienoate) to 13-hydroperoxyoctadecadienoate. May participate in the sequential oxidations of DHA ((4Z,7Z,10Z,13Z,16Z,19Z)-docosahexaenoate) to generate specialized pro-resolving mediators (SPMs)like resolvin D5 ((7S,17S)-diHPDHA) and (7S,14S)-diHPDHA, that actively down-regulate the immune response and have anti-aggregation properties with platelets. Can convert epoxy fatty acids to hydroperoxy-epoxides derivatives followed by an intramolecular nucleophilic substitution leading to the formation of monocyclic endoperoxides. Plays an important role during the maintenance of self-tolerance by peroxidizing membrane-bound phosphatidylethanolamine which can then signal the sorting process for clearance of apoptotic cells during inflammation and prevent an autoimmune response. In addition to its role in the immune and inflammatory responses, this enzyme may play a role in epithelial wound healing in the cornea through production of lipoxin A4 (LXA(4)) and docosahexaenoic acid-derived neuroprotectin D1 (NPD1; 10R,17S-HDHA), both lipid autacoids exhibit anti-inflammatory and neuroprotective properties. Furthermore, it may regulate actin polymerization which is crucial for several biological processes such as the phagocytosis of apoptotic cells. It is also implicated in the generation of endogenous ligands for peroxisome proliferator activated receptor (PPAR-gamma), hence modulating macrophage development and function. It may also exert a negative effect on skeletal development by regulating bone mass through this pathway. As well as participates in ER stress and downstream inflammation in adipocytes, pancreatic islets, and liver. Finally, it is also involved in the cellular response to IL13/interleukin-13. The polypeptide is Polyunsaturated fatty acid lipoxygenase ALOX15 (Rattus norvegicus (Rat)).